Here is a 456-residue protein sequence, read N- to C-terminus: Exodeoxyribonuclease 7 large subunit (456 aa).

The protein belongs to the XseA family. Heterooligomer composed of large and small subunits.

Its subcellular location is the cytoplasm. It catalyses the reaction Exonucleolytic cleavage in either 5'- to 3'- or 3'- to 5'-direction to yield nucleoside 5'-phosphates.. Its function is as follows. Bidirectionally degrades single-stranded DNA into large acid-insoluble oligonucleotides, which are then degraded further into small acid-soluble oligonucleotides. In Lactobacillus delbrueckii subsp. bulgaricus (strain ATCC BAA-365 / Lb-18), this protein is Exodeoxyribonuclease 7 large subunit.